A 343-amino-acid chain; its full sequence is Cytoplasmic tRNA 2-thiolation protein 1 (343 aa).

The protein belongs to the TtcA family. CTU1/NCS6/ATPBD3 subfamily.

The protein resides in the cytoplasm. Its pathway is tRNA modification; 5-methoxycarbonylmethyl-2-thiouridine-tRNA biosynthesis. Functionally, plays a central role in 2-thiolation of mcm(5)S(2)U at tRNA wobble positions of tRNA(Lys), tRNA(Glu) and tRNA(Gln). Directly binds tRNAs and probably acts by catalyzing adenylation of tRNAs, an intermediate required for 2-thiolation. It is unclear whether it acts as a sulfurtransferase that transfers sulfur from thiocarboxylated URM1 onto the uridine of tRNAs at wobble position. In Drosophila willistoni (Fruit fly), this protein is Cytoplasmic tRNA 2-thiolation protein 1.